The sequence spans 360 residues: tRNA (guanine(37)-N(1))-methyltransferase (360 aa).

Residues Arg-197, 235–236, and Asn-283 each bind S-adenosyl-L-methionine; that span reads DL.

The protein belongs to the class I-like SAM-binding methyltransferase superfamily. TRM5/TYW2 family. In terms of assembly, monomer.

The protein resides in the mitochondrion matrix. The protein localises to the nucleus. It localises to the cytoplasm. The catalysed reaction is guanosine(37) in tRNA + S-adenosyl-L-methionine = N(1)-methylguanosine(37) in tRNA + S-adenosyl-L-homocysteine + H(+). Specifically methylates the N1 position of guanosine-37 in various cytoplasmic and mitochondrial tRNAs. Methylation is not dependent on the nature of the nucleoside 5' of the target nucleoside. This is the first step in the biosynthesis of wybutosine (yW), a modified base adjacent to the anticodon of tRNAs and required for accurate decoding. This is tRNA (guanine(37)-N(1))-methyltransferase from Encephalitozoon cuniculi (strain GB-M1) (Microsporidian parasite).